The primary structure comprises 387 residues: Putative actin-29 (387 aa).

Belongs to the actin family.

The protein localises to the cytoplasm. Its subcellular location is the cytoskeleton. It catalyses the reaction ATP + H2O = ADP + phosphate + H(+). Actins are highly conserved proteins that are involved in various types of cell motility and are ubiquitously expressed in all eukaryotic cells. Multiple isoforms are involved in various cellular functions such as cytoskeleton structure, cell mobility, chromosome movement and muscle contraction. This is Putative actin-29 (act29) from Dictyostelium discoideum (Social amoeba).